We begin with the raw amino-acid sequence, 278 residues long: Pre-hexon-linking protein VIII (278 aa).

A propeptide spanning residues 114 to 199 (SPSLLSGGAS…ILRYRRLGQQ (86 aa)) is cleaved from the precursor.

The protein belongs to the adenoviridae hexon-linking protein family. Interacts with the peripentonal hexons as well as the hexons in the facets. Part of a complex composed of the core-capsid bridging protein, the endosome lysis protein VI and the hexon-linking protein VIII; these interactions bridge the virus core to the capsid. In terms of processing, cleaved by the viral protease during virion maturation. May cause the middle segment to be shed from the capsid.

Its subcellular location is the virion. The protein resides in the host nucleus. Structural component of the virion that acts as a cement protein on the capsid interior and which glue the peripentonal hexons and group-of-nine hexons together. This Pantherophis guttatus (Corn snake) protein is Pre-hexon-linking protein VIII.